The chain runs to 540 residues: Tyrosine-protein kinase transforming protein erbB (540 aa).

The 268-residue stretch at 132–399 folds into the Protein kinase domain; sequence FKKVKVLGFG…KMARDPPRYL (268 aa). Residues 138 to 146 and Lys-165 each bind ATP; that span reads LGFGAFGTV. Asp-257 (proton acceptor) is an active-site residue.

It belongs to the protein kinase superfamily. Tyr protein kinase family. EGF receptor subfamily.

It carries out the reaction L-tyrosyl-[protein] + ATP = O-phospho-L-tyrosyl-[protein] + ADP + H(+). This Avian erythroblastosis virus (strain ts167) protein is Tyrosine-protein kinase transforming protein erbB (V-ERBB).